A 197-amino-acid polypeptide reads, in one-letter code: Probable molybdenum cofactor guanylyltransferase (197 aa).

GTP is bound by residues 12–14, lysine 24, aspartate 71, and aspartate 103; that span reads LAG. Position 103 (aspartate 103) interacts with Mg(2+).

Belongs to the MobA family. Mg(2+) serves as cofactor.

The protein resides in the cytoplasm. The enzyme catalyses Mo-molybdopterin + GTP + H(+) = Mo-molybdopterin guanine dinucleotide + diphosphate. In terms of biological role, transfers a GMP moiety from GTP to Mo-molybdopterin (Mo-MPT) cofactor (Moco or molybdenum cofactor) to form Mo-molybdopterin guanine dinucleotide (Mo-MGD) cofactor. The protein is Probable molybdenum cofactor guanylyltransferase of Mycolicibacterium paratuberculosis (strain ATCC BAA-968 / K-10) (Mycobacterium paratuberculosis).